Here is a 440-residue protein sequence, read N- to C-terminus: Protein EFFECTOR OF TRANSCRIPTION (440 aa).

A GIY-YIG domain is found at 131–167; it reads SIQGLGVAVNIHDADDISHGQTESIRTRLRSYGRPVP. The disordered stretch occupies residues 172-216; that stretch reads LGDNASQTITQKKTGGRSKDKKHGFEEERDVSRVEAEENNTNSVH. The segment covering 175–184 has biased composition (polar residues); sequence NASQTITQKK. The span at 194-207 shows a compositional bias: basic and acidic residues; it reads HGFEEERDVSRVEA. 2 Cx9Cx9RCx2HK repeats span residues 247–272 and 295–320; these read CGVL…TEHK and CGVI…EDHK. A disordered region spans residues 339 to 363; it reads ILKEDKSKPKTRTSSTNQEEPGESL. Cx9Cx9RCx2HK repeat units lie at residues 365–390 and 409–434; these read CEAT…WQHK and CGVK…QEHK.

Its subcellular location is the nucleus. Functionally, transcription regulator that negatively modulates gibberellin-mediated developmental processes. May act as transcriptional repressor of giberellin controlled genes. Binds DNA without sequence preference. The polypeptide is Protein EFFECTOR OF TRANSCRIPTION (Brassica napus (Rape)).